The primary structure comprises 496 residues: Mothers against decapentaplegic homolog 6 (496 aa).

Basic residues predominate over residues 1-15 (MFRSKRSGLVRRLWR). Disordered regions lie at residues 1–116 (MFRS…PGWL) and 136–156 (GAPR…AGGG). Dimethylated arginine; alternate occurs at positions 75 and 82. 2 positions are modified to omega-N-methylarginine; alternate: arginine 75 and arginine 82. Positions 148-275 (AALEPAGGGR…FSRLCGPESP (128 aa)) constitute an MH1 domain. Residue lysine 173 forms a Glycyl lysine isopeptide (Lys-Gly) (interchain with G-Cter in ubiquitin) linkage. 4 residues coordinate Zn(2+): cysteine 205, cysteine 247, cysteine 260, and histidine 265. An MH2 domain is found at 331–496 (WCSVAYWEHR…WLEILLNNPR (166 aa)). Serine 435 is subject to Phosphoserine; by PRKX; in vitro.

Belongs to the dwarfin/SMAD family. In terms of assembly, interacts with NEDD4L. Interacts with WWP1. Interacts with STAMBP and PRKX. Interacts with RNF111 and AXIN1. Interacts with TGF-beta type I receptor superfamily members, including ACVR1B, BMPR1B and TGFBR1. In response to BMP2, but not to TGFB treatment, interacts with SMAD1, but not with SMAD2, nor with SMAD4; this interaction may inhibit SMAD1 binding to SMAD4. Interacts with HOXC8 and HOXC9. Interacts with PELI1; this interaction interferes with PELI1 complex formation with TRAF6, IRAK1, IRAK4 and MYD88 in response to IL1B and hence negatively regulates IL1R-TLR signaling. Interacts with TSC22D1/TSC-22. In terms of processing, phosphorylated by BMP type 1 receptor kinase and by PRKX. Monoubiquitinated at Lys-173 by the E2/E3 hybrid ubiquitin-protein ligase UBE2O, leading to reduced binding affinity for the activated BMP type I receptor ACVR1/ALK2, thereby enhancing BMP7 and regulating adipocyte differentiation. Ubiquitinated by WWP1. Ubiquitinated by ARK2C, promoting proteasomal degradation, leading to enhance the BMP-Smad signaling. Post-translationally, arginine methylation by PRMT1, which is recruited by BMPR2, initiates BMP-Induced signaling and induces dissociation from the BMPR1B receptor at the cell surface leading to derepress downstream Smad1/Smad5 signaling. Expressed in the brain, heart, ovary, peripheral blood leukocytes, small intestine, spleen, thymus, bone marrow, fetal liver and lymph nodes.

The protein resides in the nucleus. Transforming growth factor-beta superfamily receptors signaling occurs through the Smad family of intracellular mediators. SMAD6 is an inhibitory Smad (i-Smad) that negatively regulates signaling downstream of type I transforming growth factor-beta. Acts as a mediator of TGF-beta and BMP anti-inflammatory activities. Suppresses IL1R-TLR signaling through its direct interaction with PEL1, preventing NF-kappa-B activation, nuclear transport and NF-kappa-B-mediated expression of pro-inflammatory genes. Blocks the BMP-SMAD1 signaling pathway by competing with SMAD4 for receptor-activated SMAD1-binding. Binds to regulatory elements in target promoter regions. The sequence is that of Mothers against decapentaplegic homolog 6 (SMAD6) from Homo sapiens (Human).